We begin with the raw amino-acid sequence, 568 residues long: Potassium-transporting ATPase potassium-binding subunit (568 aa).

The next 12 helical transmembrane spans lie at 7–27, 67–87, 137–157, 180–200, 258–278, 288–308, 332–352, 361–381, 384–404, 421–441, 488–508, and 535–555; these read LLITSFLLILMLLAKPLGNII, YALAITIFNLTGLLLLFTLLV, GLTVQNFLSAATGIAVAFALI, LYLLLPLSMVIALVFVSQGVI, FIQILSIFLIPCALCFAFGQV, LLWAMSIIFVIATVGVMYAEL, FGILATSIYAVVTTAASCGAV, ALGGMIPMWLIQIGEVVFGGV, GLYGMLLFVLLTVFIAGLMIG, MVALAILVTPTLALLGTALTI, LLLAIILFLGRFGMILPVLAI, and LLILTIMLIGALTFIPALILG.

This sequence belongs to the KdpA family. In terms of assembly, the system is composed of three essential subunits: KdpA, KdpB and KdpC.

It localises to the cell inner membrane. Its function is as follows. Part of the high-affinity ATP-driven potassium transport (or Kdp) system, which catalyzes the hydrolysis of ATP coupled with the electrogenic transport of potassium into the cytoplasm. This subunit binds the periplasmic potassium ions and delivers the ions to the membrane domain of KdpB through an intramembrane tunnel. This chain is Potassium-transporting ATPase potassium-binding subunit, found in Photorhabdus laumondii subsp. laumondii (strain DSM 15139 / CIP 105565 / TT01) (Photorhabdus luminescens subsp. laumondii).